The primary structure comprises 227 residues: PKHD-type hydroxylase BTH_II1201 (227 aa).

One can recognise a Fe2OG dioxygenase domain in the interval 78–178 (KVFPPLFNRY…RVASFFWIQS (101 aa)). Fe cation contacts are provided by histidine 96, aspartate 98, and histidine 159. Position 169 (arginine 169) interacts with 2-oxoglutarate.

Requires Fe(2+) as cofactor. It depends on L-ascorbate as a cofactor.

This Burkholderia thailandensis (strain ATCC 700388 / DSM 13276 / CCUG 48851 / CIP 106301 / E264) protein is PKHD-type hydroxylase BTH_II1201.